The following is a 681-amino-acid chain: Envelope glycoprotein (681 aa).

Positions Met1 to Asn18 are cleaved as a signal peptide. At Leu19 to Asp648 the chain is on the extracellular side. Disulfide bonds link Cys37-Cys610, Cys92-Cys119, Cys211-Cys226, Cys512-Cys557, and Cys602-Cys609. The tract at residues Ser38–His188 is receptor-binding. Asn94, Asn171, Asn190, Asn202, Asn207, Asn219, Asn223, and Asn255 each carry an N-linked (GlcNAc...) asparagine; by host glycan. Positions Asn223–His427 are disordered. 3 stretches are compositionally biased toward polar residues: residues Leu244–Pro259, Thr281–Leu290, and Gly308–Ala318. The segment at Glu277 to Pro455 is mucin-like region. N-linked (GlcNAc...) asparagine; by host glycans are attached at residues Asn310, Asn313, Asn325, Asn326, Asn337, Asn344, Asn345, Asn350, Asn360, Asn408, and Asn487. The segment covering Asn337–Ser347 has biased composition (low complexity). The segment covering Lys348–Phe414 has biased composition (polar residues). Residues Gly529 to Ile549 are fusion peptide. Residue Asn564 is glycosylated (N-linked (GlcNAc...) asparagine; by host). Asn619 carries an N-linked (GlcNAc...) asparagine; by host glycan. Residues Trp649–Leu669 traverse the membrane as a helical segment. Topologically, residues Ser670 to Gly681 are cytoplasmic. Residues Cys671 and Cys673 are each lipidated (S-palmitoyl cysteine; by host).

Belongs to the filoviruses glycoprotein family. As to quaternary structure, homotrimer; each monomer consists of a GP1 and a GP2 subunit linked by disulfide bonds. The resulting peplomers (GP1,2) protrude from the virus surface as spikes. GP1,2 interacts with human CD209 and CLEC4M (collectively referred to as DC-SIGN(R)). Asialoglycoprotein receptor (ASGP-R) may be a liver-specific receptor for GP1,2. Members of the Tyro3 receptor tyrosine kinase family may be cell entry factors interacting with GP1,2. Post-translationally, N-glycosylated. In terms of processing, O-glycosylated in the mucin-like region. Specific enzymatic cleavages in vivo yield mature proteins. The precursor is processed into GP1 and GP2 by host cell furin in the trans Golgi, and maybe by other host proteases, to yield the mature GP1 and GP2 proteins. The cleavage site corresponds to the furin optimal cleavage sequence [KR]-X-[KR]-R. Post-translationally, GP1 is phosphorylated on serine residues between residues 260 and 273.

Its subcellular location is the virion membrane. The protein localises to the host cell membrane. Functionally, GP1 is responsible for binding to the receptor(s) on target cells. Interacts with CD209/DC-SIGN and CLEC4M/DC-SIGNR which act as cofactors for virus entry into the host cell. Binding to CD209 and CLEC4M, which are respectively found on dendritic cells (DCs), and on endothelial cells of liver sinusoids and lymph node sinuses, facilitate infection of macrophages and endothelial cells. These interactions not only facilitate virus cell entry, but also allow capture of viral particles by DCs and subsequent transmission to susceptible cells without DCs infection (trans infection). In terms of biological role, GP2 acts as a class I viral fusion protein. Under the current model, the protein has at least 3 conformational states: pre-fusion native state, pre-hairpin intermediate state, and post-fusion hairpin state. During viral and target cell membrane fusion, the coiled coil regions (heptad repeats) assume a trimer-of-hairpins structure, positioning the fusion peptide in close proximity to the C-terminal region of the ectodomain. The formation of this structure appears to drive apposition and subsequent fusion of viral and target cell membranes. Responsible for penetration of the virus into the cell cytoplasm by mediating the fusion of the membrane of the endocytosed virus particle with the endosomal membrane. Low pH in endosomes induces an irreversible conformational change in GP2, releasing the fusion hydrophobic peptide. This is Envelope glycoprotein (GP) from Lake Victoria marburgvirus (strain Musoke-80) (MARV).